A 286-amino-acid chain; its full sequence is Shikimate dehydrogenase (NADP(+)) (286 aa).

Shikimate contacts are provided by residues 19-21 and Thr-66; that span reads SVS. Lys-70 acts as the Proton acceptor in catalysis. Shikimate-binding residues include Asn-91 and Asp-106. NADP(+) is bound by residues 130–134 and Ala-225; that span reads GAGGS. Residue Tyr-227 coordinates shikimate. Gly-248 serves as a coordination point for NADP(+).

This sequence belongs to the shikimate dehydrogenase family. In terms of assembly, homodimer.

The catalysed reaction is shikimate + NADP(+) = 3-dehydroshikimate + NADPH + H(+). The protein operates within metabolic intermediate biosynthesis; chorismate biosynthesis; chorismate from D-erythrose 4-phosphate and phosphoenolpyruvate: step 4/7. Involved in the biosynthesis of the chorismate, which leads to the biosynthesis of aromatic amino acids. Catalyzes the reversible NADPH linked reduction of 3-dehydroshikimate (DHSA) to yield shikimate (SA). In Dehalococcoides mccartyi (strain ATCC BAA-2100 / JCM 16839 / KCTC 5957 / BAV1), this protein is Shikimate dehydrogenase (NADP(+)).